The primary structure comprises 94 residues: UPF0235 protein TK0768 (94 aa).

This sequence belongs to the UPF0235 family.

This chain is UPF0235 protein TK0768, found in Thermococcus kodakarensis (strain ATCC BAA-918 / JCM 12380 / KOD1) (Pyrococcus kodakaraensis (strain KOD1)).